Reading from the N-terminus, the 408-residue chain is ORC1-type DNA replication protein 15 (408 aa).

ATP is bound by residues valine 60–alanine 64, tyrosine 208, and arginine 220.

It belongs to the CDC6/cdc18 family.

Its function is as follows. Involved in regulation of DNA replication. In Haloarcula marismortui (strain ATCC 43049 / DSM 3752 / JCM 8966 / VKM B-1809) (Halobacterium marismortui), this protein is ORC1-type DNA replication protein 15 (cdc6o).